The following is a 134-amino-acid chain: Ribosome-binding factor A (134 aa).

Belongs to the RbfA family. In terms of assembly, monomer. Binds 30S ribosomal subunits, but not 50S ribosomal subunits or 70S ribosomes.

It is found in the cytoplasm. Functionally, one of several proteins that assist in the late maturation steps of the functional core of the 30S ribosomal subunit. Associates with free 30S ribosomal subunits (but not with 30S subunits that are part of 70S ribosomes or polysomes). Required for efficient processing of 16S rRNA. May interact with the 5'-terminal helix region of 16S rRNA. This chain is Ribosome-binding factor A, found in Bdellovibrio bacteriovorus (strain ATCC 15356 / DSM 50701 / NCIMB 9529 / HD100).